A 599-amino-acid chain; its full sequence is Adenine deaminase (599 aa).

This sequence belongs to the metallo-dependent hydrolases superfamily. Adenine deaminase family. Mn(2+) is required as a cofactor.

It carries out the reaction adenine + H2O + H(+) = hypoxanthine + NH4(+). This chain is Adenine deaminase, found in Clostridium botulinum (strain Langeland / NCTC 10281 / Type F).